The following is a 657-amino-acid chain: Glycogen debranching enzyme (657 aa).

D334 (nucleophile) is an active-site residue. E369 (proton donor) is an active-site residue. The tract at residues 458–485 (ANGEQNRDGTNSNFSFNHGTEGLEADET) is disordered. Polar residues predominate over residues 465-475 (DGTNSNFSFNH).

Belongs to the glycosyl hydrolase 13 family.

It is found in the cytoplasm. It catalyses the reaction Hydrolysis of (1-&gt;6)-alpha-D-glucosidic linkages to branches with degrees of polymerization of three or four glucose residues in limit dextrin.. The protein operates within glycan degradation; glycogen degradation. Its activity is regulated as follows. Slightly activated by Ca(2+). Inhibited by divalent cations such as Zn(2+), Cu(2+), Fe(2+), Mg(2+), Mn(2+), but only slightly inhibited by EDTA. Its function is as follows. Removes maltotriose and maltotetraose chains that are attached by 1,6-alpha-linkage to the limit dextrin main chain, generating a debranched limit dextrin. Hydrolyzes the alpha-1,6-glycosidic linkages in amylopectin while does not hydrolyze the alpha-1,4-glycosidic linkages in amylose. Native glycogen is a poor substrate. This chain is Glycogen debranching enzyme, found in Dickeya chrysanthemi (Pectobacterium chrysanthemi).